The primary structure comprises 716 residues: Pyruvate/proton symporter BtsT (716 aa).

At methionine 1–lysine 5 the chain is on the cytoplasmic side. The helical transmembrane segment at isoleucine 6–valine 26 threads the bilayer. Topologically, residues alanine 27–arginine 30 are periplasmic. The helical transmembrane segment at glycine 31–tyrosine 51 threads the bilayer. The Cytoplasmic segment spans residues arginine 52 to tyrosine 88. Residues valine 89–leucine 109 traverse the membrane as a helical segment. Residues alanine 110–threonine 119 lie on the Periplasmic side of the membrane. A helical transmembrane segment spans residues leucine 120–isoleucine 140. Over serine 141–threonine 163 the chain is Cytoplasmic. Residues isoleucine 164–valine 184 traverse the membrane as a helical segment. Over valine 185–serine 191 the chain is Periplasmic. A helical transmembrane segment spans residues proline 192–methionine 212. At arginine 213–glutamate 222 the chain is on the cytoplasmic side. A helical membrane pass occupies residues valine 223 to histidine 243. The Periplasmic portion of the chain corresponds to aspartate 244 to threonine 257. The helical transmembrane segment at isoleucine 258 to leucine 278 threads the bilayer. The Cytoplasmic portion of the chain corresponds to alanine 279–aspartate 282. The helical transmembrane segment at tyrosine 283–leucine 303 threads the bilayer. Residues asparagine 304–alanine 326 lie on the Periplasmic side of the membrane. A helical transmembrane segment spans residues leucine 327–isoleucine 347. The Cytoplasmic portion of the chain corresponds to serine 348–serine 374. The helical transmembrane segment at phenylalanine 375 to methionine 395 threads the bilayer. The Periplasmic portion of the chain corresponds to asparagine 396–alanine 484. A helical membrane pass occupies residues aspartate 485–leucine 505. At aspartate 506–aspartate 531 the chain is on the cytoplasmic side. Residues serine 532–tyrosine 552 form a helical membrane-spanning segment. Over glutamine 553–leucine 568 the chain is Periplasmic. Residues phenylalanine 569–isoleucine 589 form a helical membrane-spanning segment. The Cytoplasmic segment spans residues lysine 590–tyrosine 596. The chain crosses the membrane as a helical span at residues isoleucine 597–leucine 617. At lysine 618–serine 668 the chain is on the periplasmic side. Residues isoleucine 669–valine 689 form a helical membrane-spanning segment. Over arginine 690–histidine 716 the chain is Cytoplasmic. The disordered stretch occupies residues threonine 696–histidine 716.

The protein belongs to the peptide transporter carbon starvation (CstA) (TC 2.A.114) family. Interacts with BtsS and YpdA.

The protein localises to the cell inner membrane. The enzyme catalyses pyruvate(out) + H(+)(out) = pyruvate(in) + H(+)(in). With respect to regulation, transport is inhibited by the protonophores 2,4-dinitrophenol (DNP) and carbonyl cyanide m-chlorophenyl hydrazone (CCCP), but not by ionophores such as valinomycin, nonactin and nigericin. Functionally, transports pyruvate with a high affinity and specificity. The process is driven by the proton motive force. Under nutrient limiting conditions, mediates the uptake of pyruvate, thus enabling it to be used as a carbon source for the growth and survival. Part of a nutrient-sensing regulatory network composed of the two-component regulatory systems BtsS/BtsR and YpdA/YpdB, and their respective target proteins, BtsT and YhjX. The polypeptide is Pyruvate/proton symporter BtsT (Escherichia coli (strain K12)).